Reading from the N-terminus, the 68-residue chain is Frenatin-3 (68 aa).

Residues 1–22 (MHFLKKSIFLVLFLGLVSLSIC) form the signal peptide. The propeptide occupies 23–46 (EKEKREDQNEEEVDENEEESEEKR). Residues 26-47 (KREDQNEEEVDENEEESEEKRG) form a disordered region. Over residues 30–42 (QNEEEVDENEEES) the composition is skewed to acidic residues.

It belongs to the frog skin active peptide (FSAP) family. Frenatin subfamily. In terms of tissue distribution, expressed by the granular skin glands.

It is found in the secreted. Antimicrobial peptide with activity against both Gram-positive and Gram-negative bacteria. Antibacterial activities have been tested against Bacillus cereus (MIC=12.5 ug/ml), Escherichia coli (MIC=50 ug/ml), Leuconostoc mesenteroides (MIC=25 ug/ml), Micrococcus luteus (MIC=1.5 ug/ml), Pastewella haemolytica (MIC=0.8 ug/ml), Staphylococcus aureus (MIC&lt;l00 ug/ml), Streptococcus faecalis (MIC&lt;150 ug/ml) and Streptococcus uberis (MIC=50 ug/ml). Strongly inhibits the formation of NO by neuronal nitric oxide synthase (nNOS) at micromolar concentrations. Acts by a non-competitive mechanism, probably by binding to calcium/calmodulin and as a consequence blocking calmodulin attachment to nNOS. This chain is Frenatin-3, found in Nyctimystes infrafrenatus (White-lipped tree frog).